Reading from the N-terminus, the 223-residue chain is Endonuclease NucS (223 aa).

It belongs to the NucS endonuclease family.

The protein resides in the cytoplasm. Its function is as follows. Cleaves both 3' and 5' ssDNA extremities of branched DNA structures. This is Endonuclease NucS from Streptomyces coelicolor (strain ATCC BAA-471 / A3(2) / M145).